Here is a 1587-residue protein sequence, read N- to C-terminus: Sister chromatid cohesion protein mis4 (1587 aa).

The tract at residues P140 to C172 is disordered. The span at S147–T162 shows a compositional bias: polar residues. Low complexity predominate over residues P163–C172. Phosphoserine is present on S183. 6 HEAT repeats span residues L775 to I812, R814 to E851, I853 to D888, N890 to S927, A1101 to S1140, and D1183 to S1220.

This sequence belongs to the SCC2/Nipped-B family. In terms of assembly, interacts with ssl3.

It is found in the nucleus. Its subcellular location is the chromosome. Plays a structural role in chromatin. Chromatid cohesion molecule required for equal sister chromatid separation in anaphase. May form a stable link between chromatids in S phase that is split rather than removed in anaphase. Also required for spindle-kinetochore interaction in early mitosis and inhibit sister chromatid separation until the cleavage of Rad21 in anaphase. This chain is Sister chromatid cohesion protein mis4 (mis4), found in Schizosaccharomyces pombe (strain 972 / ATCC 24843) (Fission yeast).